We begin with the raw amino-acid sequence, 148 residues long: Deoxyuridine 5'-triphosphate nucleotidohydrolase (148 aa).

Substrate contacts are provided by residues 67–69 (RSG), Asn-80, 84–86 (LID), and Met-94.

Belongs to the dUTPase family. It depends on Mg(2+) as a cofactor.

It catalyses the reaction dUTP + H2O = dUMP + diphosphate + H(+). Its pathway is pyrimidine metabolism; dUMP biosynthesis; dUMP from dCTP (dUTP route): step 2/2. In terms of biological role, this enzyme is involved in nucleotide metabolism: it produces dUMP, the immediate precursor of thymidine nucleotides and it decreases the intracellular concentration of dUTP so that uracil cannot be incorporated into DNA. The protein is Deoxyuridine 5'-triphosphate nucleotidohydrolase of Burkholderia ambifaria (strain MC40-6).